A 1070-amino-acid polypeptide reads, in one-letter code: DNA-directed RNA polymerase subunit beta (1070 aa).

It belongs to the RNA polymerase beta chain family. In terms of assembly, in plastids the minimal PEP RNA polymerase catalytic core is composed of four subunits: alpha, beta, beta', and beta''. When a (nuclear-encoded) sigma factor is associated with the core the holoenzyme is formed, which can initiate transcription.

The protein resides in the plastid. It is found in the chloroplast. It carries out the reaction RNA(n) + a ribonucleoside 5'-triphosphate = RNA(n+1) + diphosphate. In terms of biological role, DNA-dependent RNA polymerase catalyzes the transcription of DNA into RNA using the four ribonucleoside triphosphates as substrates. In Nicotiana tomentosiformis (Tobacco), this protein is DNA-directed RNA polymerase subunit beta.